The sequence spans 358 residues: Heme A synthase (358 aa).

Transmembrane regions (helical) follow at residues 22-42 (IQVW…VGGA), 107-127 (ILGR…WATK), 139-159 (IVPI…ASGI), 173-193 (AFHL…SRGF), 208-228 (FAGW…LVAG), 269-289 (FIHR…AFYV), 302-322 (AFFI…TLLR), and 324-344 (VPIG…CFSV). A heme-binding site is contributed by His-271. His-332 contacts heme.

It belongs to the COX15/CtaA family. Type 2 subfamily. In terms of assembly, interacts with CtaB. Requires heme b as cofactor.

Its subcellular location is the cell membrane. It catalyses the reaction Fe(II)-heme o + 2 A + H2O = Fe(II)-heme a + 2 AH2. Its pathway is porphyrin-containing compound metabolism; heme A biosynthesis; heme A from heme O: step 1/1. Catalyzes the conversion of heme O to heme A by two successive hydroxylations of the methyl group at C8. The first hydroxylation forms heme I, the second hydroxylation results in an unstable dihydroxymethyl group, which spontaneously dehydrates, resulting in the formyl group of heme A. This is Heme A synthase from Bartonella quintana (strain Toulouse) (Rochalimaea quintana).